Consider the following 520-residue polypeptide: Cytochrome P450 72A68 (520 aa).

The helical transmembrane segment at 11-31 (IILITVTFGLVYAWRVLNWMW) threads the bilayer. A heme-binding site is contributed by Cys466.

The protein belongs to the cytochrome P450 family. Heme serves as cofactor.

It localises to the membrane. The enzyme catalyses oleanolate + 3 reduced [NADPH--hemoprotein reductase] + 3 O2 = gypsogenate + 3 oxidized [NADPH--hemoprotein reductase] + 4 H2O + 4 H(+). In terms of biological role, catalyzes the carboxylation of oleanolic acid at the C-23 position to form gypsogenic acid. Involved in the hemolytic saponin biosynthetic pathway. This chain is Cytochrome P450 72A68, found in Medicago truncatula (Barrel medic).